The following is a 158-amino-acid chain: NADH-quinone oxidoreductase subunit B (158 aa).

[4Fe-4S] cluster contacts are provided by cysteine 37, cysteine 38, cysteine 102, and cysteine 132.

This sequence belongs to the complex I 20 kDa subunit family. As to quaternary structure, NDH-1 is composed of 14 different subunits. Subunits NuoB, C, D, E, F, and G constitute the peripheral sector of the complex. [4Fe-4S] cluster serves as cofactor.

Its subcellular location is the cell inner membrane. The catalysed reaction is a quinone + NADH + 5 H(+)(in) = a quinol + NAD(+) + 4 H(+)(out). NDH-1 shuttles electrons from NADH, via FMN and iron-sulfur (Fe-S) centers, to quinones in the respiratory chain. The immediate electron acceptor for the enzyme in this species is believed to be ubiquinone. Couples the redox reaction to proton translocation (for every two electrons transferred, four hydrogen ions are translocated across the cytoplasmic membrane), and thus conserves the redox energy in a proton gradient. In Thiobacillus denitrificans (strain ATCC 25259 / T1), this protein is NADH-quinone oxidoreductase subunit B.